We begin with the raw amino-acid sequence, 87 residues long: MANIKSAKKRAVQSEKRRKHNASRRSMVRTFIKKVYAAIAAGDKDTAQKAFNEMQPIVDRQSSKGLIHKNKAARHKSNLVAQINAMQ.

The disordered stretch occupies residues 1 to 26; the sequence is MANIKSAKKRAVQSEKRRKHNASRRS.

It belongs to the bacterial ribosomal protein bS20 family.

Its function is as follows. Binds directly to 16S ribosomal RNA. This Yersinia enterocolitica serotype O:8 / biotype 1B (strain NCTC 13174 / 8081) protein is Small ribosomal subunit protein bS20.